Consider the following 185-residue polypeptide: Ribosome-recycling factor (185 aa).

It belongs to the RRF family.

Its subcellular location is the cytoplasm. Its function is as follows. Responsible for the release of ribosomes from messenger RNA at the termination of protein biosynthesis. May increase the efficiency of translation by recycling ribosomes from one round of translation to another. In Bacillus anthracis (strain A0248), this protein is Ribosome-recycling factor.